Consider the following 494-residue polypeptide: Tripartite motif-containing protein 5 (494 aa).

N-acetylalanine is present on A2. The RING-type zinc finger occupies 15–59; it reads CPICLELLTEPLSLDCGHSFCQACITANHKESTLHQGERSCPLCR. At S86 the chain carries Phosphoserine. A B box-type zinc finger spans residues 91 to 132; sequence QKVDLCARHGEKLLLFCQQDGNVICWLCERSQEHRGHHTFLV. Positions 96, 99, 118, and 124 each coordinate Zn(2+). Positions 140 to 223 form a coiled coil; the sequence is RENLQVVLEM…RLVQSENDMV (84 aa). Residues 186–199 form a required for interaction with GABARAP and for autophagy region; sequence FKQLRDILDCEESN. The 215-residue stretch at 280 to 494 folds into the B30.2/SPRY domain; sequence PDLKGMLQVS…LPMTLCSPRS (215 aa).

Belongs to the TRIM/RBCC family. In terms of assembly, can form homodimers and homotrimers. In addition to lower-order dimerization, also exhibits a higher-order multimerization and both low- and high-order multimerizations are essential for its restriction activity. Interacts with BTBD1 and BTBD2. Interacts with PSMC4, PSMC5, PSMD7 and HSPA8/HSC70. Interacts (via B30.2/SPRY domain) with HSPA1A/B. Interacts with PSMC2, MAP3K7/TAK1, TAB2 and TAB3. Interacts with SQSTM1. Interacts with TRIM6 and TRIM34. Interacts with ULK1 (phosphorylated form), GABARAP, GABARAPL1, GABARAPL2, MAP1LC3A, MAP1LC3C and BECN1. In terms of processing, degraded in a proteasome-independent fashion in the absence of viral infection but in a proteasome-dependent fashion following exposure to restriction sensitive virus. Post-translationally, autoubiquitinated in a RING finger- and UBE2D2-dependent manner. Monoubiquitinated by TRIM21. Deubiquitinated by Yersinia YopJ. Ubiquitination may not lead to proteasomal degradation.

The protein resides in the cytoplasm. It localises to the nucleus. The catalysed reaction is S-ubiquitinyl-[E2 ubiquitin-conjugating enzyme]-L-cysteine + [acceptor protein]-L-lysine = [E2 ubiquitin-conjugating enzyme]-L-cysteine + N(6)-ubiquitinyl-[acceptor protein]-L-lysine.. It functions in the pathway protein modification; protein ubiquitination. Functionally, capsid-specific restriction factor that prevents infection from non-host-adapted retroviruses. Blocks viral replication early in the life cycle, after viral entry but before reverse transcription. In addition to acting as a capsid-specific restriction factor, also acts as a pattern recognition receptor that activates innate immune signaling in response to the retroviral capsid lattice. Binding to the viral capsid triggers its E3 ubiquitin ligase activity, and in concert with the heterodimeric ubiquitin conjugating enzyme complex UBE2V1-UBE2N (also known as UBC13-UEV1A complex) generates 'Lys-63'-linked polyubiquitin chains, which in turn are catalysts in the autophosphorylation of the MAP3K7/TAK1 complex (includes TAK1, TAB2, and TAB3). Activation of the MAP3K7/TAK1 complex by autophosphorylation results in the induction and expression of NF-kappa-B and MAPK-responsive inflammatory genes, thereby leading to an innate immune response in the infected cell. Plays a role in regulating autophagy through activation of autophagy regulator BECN1 by causing its dissociation from its inhibitors BCL2 and TAB2. In Plecturocebus donacophilus (Bolivian gray titi monkey), this protein is Tripartite motif-containing protein 5 (TRIM5).